A 329-amino-acid polypeptide reads, in one-letter code: DNA-directed RNA polymerase subunit alpha (329 aa).

The interval 1–235 (MQGSVTEFLK…EQLEAFVDLR (235 aa)) is alpha N-terminal domain (alpha-NTD). The segment at 249–329 (FDPILLRPVD…NWPPASIADE (81 aa)) is alpha C-terminal domain (alpha-CTD).

The protein belongs to the RNA polymerase alpha chain family. In terms of assembly, homodimer. The RNAP catalytic core consists of 2 alpha, 1 beta, 1 beta' and 1 omega subunit. When a sigma factor is associated with the core the holoenzyme is formed, which can initiate transcription.

It catalyses the reaction RNA(n) + a ribonucleoside 5'-triphosphate = RNA(n+1) + diphosphate. Its function is as follows. DNA-dependent RNA polymerase catalyzes the transcription of DNA into RNA using the four ribonucleoside triphosphates as substrates. The sequence is that of DNA-directed RNA polymerase subunit alpha from Photorhabdus laumondii subsp. laumondii (strain DSM 15139 / CIP 105565 / TT01) (Photorhabdus luminescens subsp. laumondii).